The chain runs to 150 residues: Macrodomain Ter protein (150 aa).

This sequence belongs to the MatP family. Homodimer.

Its subcellular location is the cytoplasm. Functionally, required for spatial organization of the terminus region of the chromosome (Ter macrodomain) during the cell cycle. Prevents early segregation of duplicated Ter macrodomains during cell division. Binds specifically to matS, which is a 13 bp signature motif repeated within the Ter macrodomain. This is Macrodomain Ter protein from Salmonella arizonae (strain ATCC BAA-731 / CDC346-86 / RSK2980).